We begin with the raw amino-acid sequence, 465 residues long: MSIKISETLTFECETGNYHTFCPISCVAWLYQKIEDSFFLVVGTKTCGYFLQNALGVMIFAEPRYAMAELEEGDISAQLNDYEELKRLCVQIKKDRNPSVIIWIGTCTTEIIKMDLEGMAPKLENEIEIPIVVARANGLDYAFTQGEDTVLAAMAHRCPEQKTEIEKKIDDKSIQELFSFLPLKTKEKSNKSFTLKNTFSLVLFGSLPSTVASQLSLELKRQSIHVSGWLPAQRYTDLPILGDKVYVCGVNPFLSRTATTLMRRRKCKLIGAPFPIGPDGTRAWIEKICSVFNIETQGLEEREQQVWESLKNYLNLVRGKSVFFMGDNLLEISLARFLIRCGMIVYEIGIPYMDKRYQAAELTLLQETCKKMCIPMPRIVEKPDNYNQIQRMRELQPDLAITGMAHANPLEARGINTKWSVEFTFAQIHGFTNAKDVLELVTRPLRRNNNLENLGWTNLIKIQKR.

Positions 22, 47, and 107 each coordinate [4Fe-4S] cluster.

It belongs to the BchN/ChlN family. In terms of assembly, protochlorophyllide reductase is composed of three subunits; ChlL, ChlN and ChlB. Forms a heterotetramer of two ChlB and two ChlN subunits. It depends on [4Fe-4S] cluster as a cofactor.

It localises to the plastid. Its subcellular location is the chloroplast. The catalysed reaction is chlorophyllide a + oxidized 2[4Fe-4S]-[ferredoxin] + 2 ADP + 2 phosphate = protochlorophyllide a + reduced 2[4Fe-4S]-[ferredoxin] + 2 ATP + 2 H2O. Its pathway is porphyrin-containing compound metabolism; chlorophyll biosynthesis (light-independent). Component of the dark-operative protochlorophyllide reductase (DPOR) that uses Mg-ATP and reduced ferredoxin to reduce ring D of protochlorophyllide (Pchlide) to form chlorophyllide a (Chlide). This reaction is light-independent. The NB-protein (ChlN-ChlB) is the catalytic component of the complex. The chain is Light-independent protochlorophyllide reductase subunit N from Marchantia polymorpha (Common liverwort).